The sequence spans 502 residues: Protein DETOXIFICATION 55 (502 aa).

A run of 12 helical transmembrane segments spans residues 30–50 (IWDI…KNMT), 61–81 (LELA…YSVL), 112–132 (IFLL…LAPL), 145–165 (VASL…FLHP), 185–205 (VSVL…SLGV), 207–227 (GVAV…LCYI), 261–283 (VWST…WWWY), 298–318 (VALA…TIPT), 344–364 (ATVA…GTTV), 378–398 (VVLE…LANC), 419–439 (INFY…AFVW), and 447–467 (CYGL…VVYN).

It belongs to the multi antimicrobial extrusion (MATE) (TC 2.A.66.1) family.

The protein localises to the membrane. In Arabidopsis thaliana (Mouse-ear cress), this protein is Protein DETOXIFICATION 55.